A 288-amino-acid polypeptide reads, in one-letter code: 4-diphosphocytidyl-2-C-methyl-D-erythritol kinase (288 aa).

The active site involves lysine 13. 96-106 contributes to the ATP binding site; sequence PMGGGIGGGSS. The active site involves aspartate 138.

Belongs to the GHMP kinase family. IspE subfamily.

The catalysed reaction is 4-CDP-2-C-methyl-D-erythritol + ATP = 4-CDP-2-C-methyl-D-erythritol 2-phosphate + ADP + H(+). It functions in the pathway isoprenoid biosynthesis; isopentenyl diphosphate biosynthesis via DXP pathway; isopentenyl diphosphate from 1-deoxy-D-xylulose 5-phosphate: step 3/6. Functionally, catalyzes the phosphorylation of the position 2 hydroxy group of 4-diphosphocytidyl-2C-methyl-D-erythritol. In Aliivibrio fischeri (strain MJ11) (Vibrio fischeri), this protein is 4-diphosphocytidyl-2-C-methyl-D-erythritol kinase.